A 352-amino-acid chain; its full sequence is S-adenosylmethionine:tRNA ribosyltransferase-isomerase (352 aa).

Belongs to the QueA family. As to quaternary structure, monomer.

It is found in the cytoplasm. The catalysed reaction is 7-aminomethyl-7-carbaguanosine(34) in tRNA + S-adenosyl-L-methionine = epoxyqueuosine(34) in tRNA + adenine + L-methionine + 2 H(+). It functions in the pathway tRNA modification; tRNA-queuosine biosynthesis. In terms of biological role, transfers and isomerizes the ribose moiety from AdoMet to the 7-aminomethyl group of 7-deazaguanine (preQ1-tRNA) to give epoxyqueuosine (oQ-tRNA). The chain is S-adenosylmethionine:tRNA ribosyltransferase-isomerase from Paraburkholderia phytofirmans (strain DSM 17436 / LMG 22146 / PsJN) (Burkholderia phytofirmans).